We begin with the raw amino-acid sequence, 657 residues long: Glycogen debranching enzyme (657 aa).

Asp-336 (nucleophile) is an active-site residue. Glu-371 serves as the catalytic Proton donor. The interval 460 to 479 (ANGEENRDGTNNNYSNNHGK) is disordered.

It belongs to the glycosyl hydrolase 13 family.

The catalysed reaction is Hydrolysis of (1-&gt;6)-alpha-D-glucosidic linkages to branches with degrees of polymerization of three or four glucose residues in limit dextrin.. It functions in the pathway glycan degradation; glycogen degradation. In terms of biological role, removes maltotriose and maltotetraose chains that are attached by 1,6-alpha-linkage to the limit dextrin main chain, generating a debranched limit dextrin. In Escherichia coli O127:H6 (strain E2348/69 / EPEC), this protein is Glycogen debranching enzyme.